Consider the following 215-residue polypeptide: Large ribosomal subunit protein bL25 (215 aa).

The disordered stretch occupies residues 190-215 (VLTDAEEETDETPEEPEAIRQKGDEE). The segment covering 193 to 205 (DAEEETDETPEEP) has biased composition (acidic residues). Residues 206–215 (EAIRQKGDEE) show a composition bias toward basic and acidic residues.

This sequence belongs to the bacterial ribosomal protein bL25 family. CTC subfamily. As to quaternary structure, part of the 50S ribosomal subunit; part of the 5S rRNA/L5/L18/L25 subcomplex. Contacts the 5S rRNA. Binds to the 5S rRNA independently of L5 and L18.

In terms of biological role, this is one of the proteins that binds to the 5S RNA in the ribosome where it forms part of the central protuberance. This is Large ribosomal subunit protein bL25 from Maricaulis maris (strain MCS10) (Caulobacter maris).